The primary structure comprises 88 residues: Synaptonemal complex central element protein 3 (88 aa).

Positions 8 to 75 form a coiled coil; it reads ERSYDNMLKM…FLNCKEEMEK (68 aa).

As to quaternary structure, homodimer. Can form higher-order homooligomers. Interacts with SYCP1 (via tetrameric core); the interaction remodels SYCP1 homotetramers to 2:1 heterotrimers with SYCE3. SYCP1/SYCE3 heterotrimers form lattice assemblies as part of the mature synaptonemal complex via both lateral and head-to-head interactions. Interacts with the SYCE1-SIX6OS1 complex; the interaction recruits the SYCE1-SIX6OS1 complex to the central element of the synaptonemal complex. Interacts with the SYCE2-TEX12 complex; the interaction promotes fibrous assembly of SYCE2-TEX12 as part of the synaptonemal complex central element. Interacts with SYCE1. Interacts with SYCE2. Interacts with proteasome subunit PSMA8; to participate in meiosis progression during spermatogenesis. Interacts with SPO16. In terms of tissue distribution, expression is restricted to spermatocytes and is absent in spermatogonia, spermatids and spermatogonia (at protein level). Expressed in adult testis and embryonic ovary. Expressed in the convoluted seminiferous tubules in spermatogonia and spermatocytes.

It localises to the nucleus. It is found in the chromosome. Major component of the transverse central element of synaptonemal complexes (SCS), formed between homologous chromosomes during meiotic prophase. Required for the assembly of the central element of the synaptonemal complex during meiosis, via remodeling of SYCP1 lattice structures and promoting recruitment of SYCE2-TEX12 and SYCE1-SIX60S1 complexes. Required for chromosome loading of the central element-specific SCS proteins, and for initiating synapsis between homologous chromosomes. Chromosome loading appears to require SYCP1. Required for fertility and normal testis development. May play a role in apoptosis of spermatogenic cells and pathogenesis of cryptorchidism. This chain is Synaptonemal complex central element protein 3, found in Mus musculus (Mouse).